The primary structure comprises 143 residues: MSEIETIGFHYVVEAAGCDPEILGNADRIREIFLEAAKVGNMEVKSSYFFKFSPTGVSGVVIVAESHISVHTWPEKGYAALDVYTCGTKAEPEKAVDYILEKFRAKYAHVSEIKRGIEEDDDTFTHMIMTWEESLRKNGNGKG.

S66 functions as the Schiff-base intermediate with substrate; via pyruvic acid in the catalytic mechanism. At S66 the chain carries Pyruvic acid (Ser); by autocatalysis. Catalysis depends on H71, which acts as the Proton acceptor; for processing activity. C86 acts as the Proton donor; for catalytic activity in catalysis.

The protein belongs to the prokaryotic AdoMetDC family. Type 1 subfamily. Heterotetramer of two alpha and two beta chains arranged as a dimer of alpha/beta heterodimers. It depends on pyruvate as a cofactor. In terms of processing, is synthesized initially as an inactive proenzyme. Formation of the active enzyme involves a self-maturation process in which the active site pyruvoyl group is generated from an internal serine residue via an autocatalytic post-translational modification. Two non-identical subunits are generated from the proenzyme in this reaction, and the pyruvate is formed at the N-terminus of the alpha chain, which is derived from the carboxyl end of the proenzyme. The post-translation cleavage follows an unusual pathway, termed non-hydrolytic serinolysis, in which the side chain hydroxyl group of the serine supplies its oxygen atom to form the C-terminus of the beta chain, while the remainder of the serine residue undergoes an oxidative deamination to produce ammonia and the pyruvoyl group blocking the N-terminus of the alpha chain.

It catalyses the reaction S-adenosyl-L-methionine + H(+) = S-adenosyl 3-(methylsulfanyl)propylamine + CO2. Its pathway is amine and polyamine biosynthesis; S-adenosylmethioninamine biosynthesis; S-adenosylmethioninamine from S-adenosyl-L-methionine: step 1/1. In terms of biological role, catalyzes the decarboxylation of S-adenosylmethionine to S-adenosylmethioninamine (dcAdoMet), the propylamine donor required for the synthesis of the polyamines spermine and spermidine from the diamine putrescine. In Thermococcus gammatolerans (strain DSM 15229 / JCM 11827 / EJ3), this protein is S-adenosylmethionine decarboxylase proenzyme.